Consider the following 209-residue polypeptide: Outer-membrane lipoprotein carrier protein (209 aa).

An N-terminal signal peptide occupies residues 1–24 (MTRYVISRLSAIALLALAPALALA).

The protein belongs to the LolA family. Monomer.

It is found in the periplasm. Functionally, participates in the translocation of lipoproteins from the inner membrane to the outer membrane. Only forms a complex with a lipoprotein if the residue after the N-terminal Cys is not an aspartate (The Asp acts as a targeting signal to indicate that the lipoprotein should stay in the inner membrane). In Bordetella avium (strain 197N), this protein is Outer-membrane lipoprotein carrier protein.